We begin with the raw amino-acid sequence, 38 residues long: Large ribosomal subunit protein bL36 (38 aa).

Belongs to the bacterial ribosomal protein bL36 family.

The sequence is that of Large ribosomal subunit protein bL36 from Bacteroides fragilis (strain ATCC 25285 / DSM 2151 / CCUG 4856 / JCM 11019 / LMG 10263 / NCTC 9343 / Onslow / VPI 2553 / EN-2).